The primary structure comprises 406 residues: Argininosuccinate synthase (406 aa).

Residue 8–16 coordinates ATP; the sequence is AYSGGLDTS. An L-citrulline-binding site is contributed by Tyr86. ATP is bound at residue Gly116. L-aspartate contacts are provided by Thr118, Asn122, and Asp123. Asn122 contributes to the L-citrulline binding site. The L-citrulline site is built by Arg126, Ser174, Ser183, Glu259, and Tyr271.

This sequence belongs to the argininosuccinate synthase family. Type 1 subfamily. In terms of assembly, homotetramer.

It localises to the cytoplasm. It catalyses the reaction L-citrulline + L-aspartate + ATP = 2-(N(omega)-L-arginino)succinate + AMP + diphosphate + H(+). Its pathway is amino-acid biosynthesis; L-arginine biosynthesis; L-arginine from L-ornithine and carbamoyl phosphate: step 2/3. The polypeptide is Argininosuccinate synthase (Oenococcus oeni (strain ATCC BAA-331 / PSU-1)).